The chain runs to 903 residues: DNA-directed DNA polymerase (903 aa).

The segment at 103–340 (YDHTKIRVAN…VLQIDAKRQF (238 aa)) is 3'-5'exonuclease. The Mg(2+) site is built by Asp-114, Glu-116, and Asp-222. The tract at residues 248–264 (TRVKVIENMYGSREIIT) is beta hairpin. Residues Asp-327, Asp-411, and Leu-412 each coordinate Mg(2+). Residues 380–903 (IPQGRSHPVQ…KASLFDMFDF (524 aa)) form a polymerase region. Substrate is bound by residues 414–416 (SLY), Arg-482, and Lys-560. Asp-623 provides a ligand contact to Mg(2+). The interval 705-708 (KKRY) is binding of DNA in B-conformation. The interval 897–903 (LFDMFDF) is interaction with the polymerase clamp.

Belongs to the DNA polymerase type-B family. In terms of assembly, part of the replicase complex that includes the DNA polymerase, the polymerase clamp, the clamp loader complex, the single-stranded DNA binding protein, and the primase/helicase. Interacts with the polymerase clamp; this interaction constitutes the polymerase holoenzyme. Requires Mg(2+) as cofactor.

The catalysed reaction is DNA(n) + a 2'-deoxyribonucleoside 5'-triphosphate = DNA(n+1) + diphosphate. Replicates the viral genomic DNA. This polymerase possesses two enzymatic activities: DNA synthesis (polymerase) and an exonucleolytic activity that degrades single-stranded DNA in the 3'- to 5'-direction for proofreading purpose. The polypeptide is DNA-directed DNA polymerase (43) (Escherichia coli (Bacteriophage RB69)).